Consider the following 423-residue polypeptide: Glutamate-1-semialdehyde 2,1-aminomutase (423 aa).

N6-(pyridoxal phosphate)lysine is present on Lys259.

The protein belongs to the class-III pyridoxal-phosphate-dependent aminotransferase family. HemL subfamily. It depends on pyridoxal 5'-phosphate as a cofactor.

The protein resides in the cytoplasm. It catalyses the reaction (S)-4-amino-5-oxopentanoate = 5-aminolevulinate. The protein operates within porphyrin-containing compound metabolism; protoporphyrin-IX biosynthesis; 5-aminolevulinate from L-glutamyl-tRNA(Glu): step 2/2. In Methanobrevibacter smithii (strain ATCC 35061 / DSM 861 / OCM 144 / PS), this protein is Glutamate-1-semialdehyde 2,1-aminomutase.